The chain runs to 217 residues: 3,4-dihydroxy-2-butanone 4-phosphate synthase (217 aa).

D-ribulose 5-phosphate contacts are provided by residues 37-38, D42, 150-154, and E174; these read RE and RRGHT. E38 contacts Mg(2+). H153 lines the Mg(2+) pocket.

The protein belongs to the DHBP synthase family. As to quaternary structure, homodimer. Requires Mg(2+) as cofactor. Mn(2+) serves as cofactor.

It catalyses the reaction D-ribulose 5-phosphate = (2S)-2-hydroxy-3-oxobutyl phosphate + formate + H(+). The protein operates within cofactor biosynthesis; riboflavin biosynthesis; 2-hydroxy-3-oxobutyl phosphate from D-ribulose 5-phosphate: step 1/1. Catalyzes the conversion of D-ribulose 5-phosphate to formate and 3,4-dihydroxy-2-butanone 4-phosphate. This Shewanella loihica (strain ATCC BAA-1088 / PV-4) protein is 3,4-dihydroxy-2-butanone 4-phosphate synthase.